The primary structure comprises 179 residues: Photosystem I assembly protein Ycf4 (179 aa).

2 consecutive transmembrane segments (helical) span residues 21–41 and 59–79; these read LISF…YLGV and IVMT…LLNI.

This sequence belongs to the Ycf4 family.

The protein localises to the plastid. Its subcellular location is the chloroplast thylakoid membrane. Seems to be required for the assembly of the photosystem I complex. This is Photosystem I assembly protein Ycf4 from Rhodomonas salina (Cryptomonas salina).